We begin with the raw amino-acid sequence, 502 residues long: ATP synthase subunit alpha (502 aa).

Residues 115–137 (VDGLGPVETTETRPIESPAPGVM) are disordered. 169–176 (GDRQTGKT) serves as a coordination point for ATP.

The protein belongs to the ATPase alpha/beta chains family. In terms of assembly, F-type ATPases have 2 components, CF(1) - the catalytic core - and CF(0) - the membrane proton channel. CF(1) has five subunits: alpha(3), beta(3), gamma(1), delta(1), epsilon(1). CF(0) has three main subunits: a(1), b(2) and c(9-12). The alpha and beta chains form an alternating ring which encloses part of the gamma chain. CF(1) is attached to CF(0) by a central stalk formed by the gamma and epsilon chains, while a peripheral stalk is formed by the delta and b chains.

Its subcellular location is the cell membrane. It carries out the reaction ATP + H2O + 4 H(+)(in) = ADP + phosphate + 5 H(+)(out). Functionally, produces ATP from ADP in the presence of a proton gradient across the membrane. The alpha chain is a regulatory subunit. This is ATP synthase subunit alpha from Geobacillus stearothermophilus (Bacillus stearothermophilus).